The following is a 181-amino-acid chain: Inner membrane-spanning protein YciB (181 aa).

5 consecutive transmembrane segments (helical) span residues 10-30, 50-70, 72-92, 118-138, and 148-168; these read LIIF…GALI, MHLI…VFHD, AFIK…LGVS, VTWY…YVAF, and FKVF…VFYL.

This sequence belongs to the YciB family.

Its subcellular location is the cell inner membrane. Its function is as follows. Plays a role in cell envelope biogenesis, maintenance of cell envelope integrity and membrane homeostasis. This is Inner membrane-spanning protein YciB from Shewanella sp. (strain MR-4).